We begin with the raw amino-acid sequence, 199 residues long: Small ribosomal subunit protein eS1 (199 aa).

It belongs to the eukaryotic ribosomal protein eS1 family.

The sequence is that of Small ribosomal subunit protein eS1 from Pyrococcus horikoshii (strain ATCC 700860 / DSM 12428 / JCM 9974 / NBRC 100139 / OT-3).